The chain runs to 352 residues: Photosystem II D2 protein (352 aa).

The chain crosses the membrane as a helical span at residues 40 to 60 (CAYLAVGAWFTGTTFVTSWYT). Histidine 117 contributes to the chlorophyll a binding site. A helical transmembrane segment spans residues 124–140 (GFTLRQFEIARLIGLRP). Pheophytin a is bound by residues glutamine 129 and asparagine 142. The helical transmembrane segment at 152 to 165 (VFVSVFLLYPLGQA) threads the bilayer. Histidine 197 provides a ligand contact to chlorophyll a. The chain crosses the membrane as a helical span at residues 207–227 (AALLCAIHGATVENTLFEDGD). 2 residues coordinate a plastoquinone: histidine 214 and phenylalanine 261. Histidine 214 serves as a coordination point for Fe cation. Histidine 268 contacts Fe cation. The helical transmembrane segment at 278 to 294 (GLWMSAIGVVGLGVNLR) threads the bilayer.

The protein belongs to the reaction center PufL/M/PsbA/D family. In terms of assembly, PSII is composed of 1 copy each of membrane proteins PsbA, PsbB, PsbC, PsbD, PsbE, PsbF, PsbH, PsbI, PsbJ, PsbK, PsbL, PsbM, PsbT, PsbX, PsbY, PsbZ, Psb30/Ycf12, at least 3 peripheral proteins of the oxygen-evolving complex and a large number of cofactors. It forms dimeric complexes. The D1/D2 heterodimer binds P680, chlorophylls that are the primary electron donor of PSII, and subsequent electron acceptors. It shares a non-heme iron and each subunit binds pheophytin, quinone, additional chlorophylls, carotenoids and lipids. There is also a Cl(-1) ion associated with D1 and D2, which is required for oxygen evolution. The PSII complex binds additional chlorophylls, carotenoids and specific lipids. is required as a cofactor.

The protein resides in the plastid. It is found in the cyanelle thylakoid membrane. The catalysed reaction is 2 a plastoquinone + 4 hnu + 2 H2O = 2 a plastoquinol + O2. Its function is as follows. Photosystem II (PSII) is a light-driven water:plastoquinone oxidoreductase that uses light energy to abstract electrons from H(2)O, generating O(2) and a proton gradient subsequently used for ATP formation. It consists of a core antenna complex that captures photons, and an electron transfer chain that converts photonic excitation into a charge separation. The D1/D2 (PsbA/PsbD) reaction center heterodimer binds P680, the primary electron donor of PSII as well as several subsequent electron acceptors. D2 is needed for assembly of a stable PSII complex. The chain is Photosystem II D2 protein from Cyanophora paradoxa.